The sequence spans 939 residues: U3 small nucleolar RNA-associated protein 21 (939 aa).

S2 is modified (N-acetylserine). WD repeat units follow at residues 40-71 (ATGTLGSTFYIVTCVGKTFQIYDANTLHLLFV), 81-111 (VALSAHFHYVYAAYENKVGIYKRGIEEHLLE), 119-158 (EHLCIFGDYLCASTDDNSIFIYKKSDPQDKYPSEFYTKLT), 168-201 (VSLQHLATYLNKLTVVTKSNVLLFNVRTGKLVFT), 208-245 (QITTAEPAPVLDIIALGTVTGEVIMFNMRKGKRIRTIK), 252-287 (SSLSFRTDGSSHLSVGTSSGDLIFYDLDRRSRIHVL), 295-347 (YGGV…RSRG), 354-388 (SYIAFADSQSHFMLSASKDRSLWSFSLRKDAQSQE), 415-454 (VALAIENARIGEWENIITAHKDEKFARTWDMRNKRVGRWT), 463-497 (VKSVAMSQCGNFGFIGSSNGSITIYNMQSGILRKK), 505-541 (VTGISLDGMNRKMVSCGLDGIVGFYDFNKSTLLGKLK), 546-581 (ITAMVYHRSSDLFALALDDLSIVVIDAVTQRVVRQL), 583-624 (GHSN…DGII), and 626-664 (DNVATNVKFSPNGDLLATTHVTGNGICIWTNRAQFKTVS). At S772 the chain carries Phosphoserine.

As to quaternary structure, interacts with snoRNA U3. Interacts with MPP10. Interacts (via WD repeats) with UTP18. Component of the ribosomal small subunit (SSU) processome composed of at least 40 protein subunits and snoRNA U3.

The protein resides in the nucleus. The protein localises to the nucleolus. In terms of biological role, involved in nucleolar processing of pre-18S ribosomal RNA and ribosome assembly. The polypeptide is U3 small nucleolar RNA-associated protein 21 (UTP21) (Saccharomyces cerevisiae (strain ATCC 204508 / S288c) (Baker's yeast)).